The sequence spans 415 residues: NAD-dependent protein deacetylase hst4 (415 aa).

Residues 1–26 (MKVEEHVPLIQESRKRKCQSSENASK) are disordered. Positions 40 to 337 (TGNENVDLSP…RRLKPLLDAP (298 aa)) constitute a Deacetylase sirtuin-type domain. NAD(+) contacts are provided by residues 65-84 (GAGI…EGLF) and 153-156 (QNID). The Proton acceptor role is filled by His-184. 4 residues coordinate Zn(2+): Cys-192, Cys-195, Cys-214, and Cys-217. NAD(+) is bound by residues 273–275 (GTS), 303–305 (NYD), and Leu-323.

It belongs to the sirtuin family. Class I subfamily. The cofactor is Zn(2+).

It localises to the nucleus. The protein localises to the nucleolus. It catalyses the reaction N(6)-acetyl-L-lysyl-[protein] + NAD(+) + H2O = 2''-O-acetyl-ADP-D-ribose + nicotinamide + L-lysyl-[protein]. Its function is as follows. NAD-dependent histone deacetylase, which contributes to both telomeric and centromeric silencing, proper cell cycle progression, DNA damage control, recombination, and genomic maintenance. The chain is NAD-dependent protein deacetylase hst4 (hst4) from Schizosaccharomyces pombe (strain 972 / ATCC 24843) (Fission yeast).